A 307-amino-acid chain; its full sequence is Elongation factor Ts (307 aa).

The segment at 80–83 (TDFV) is involved in Mg(2+) ion dislocation from EF-Tu.

This sequence belongs to the EF-Ts family.

The protein resides in the cytoplasm. Associates with the EF-Tu.GDP complex and induces the exchange of GDP to GTP. It remains bound to the aminoacyl-tRNA.EF-Tu.GTP complex up to the GTP hydrolysis stage on the ribosome. In Clostridium botulinum (strain 657 / Type Ba4), this protein is Elongation factor Ts.